The chain runs to 75 residues: U9-theraphotoxin-Cg1a (75 aa).

The signal sequence occupies residues 1-21 (MKTLVLFIIFGLAALFLLSSA). Residues 22-29 (NELEETER) constitute a propeptide that is removed on maturation. 3 cysteine pairs are disulfide-bonded: Cys-31/Cys-46, Cys-38/Cys-51, and Cys-45/Cys-58.

It belongs to the neurotoxin 10 (Hwtx-1) family. 43 (Jztx-49) subfamily. In terms of tissue distribution, expressed by the venom gland.

It is found in the secreted. Probable ion channel inhibitor. In Chilobrachys guangxiensis (Chinese earth tiger tarantula), this protein is U9-theraphotoxin-Cg1a.